A 316-amino-acid polypeptide reads, in one-letter code: UDP-N-acetyl-2-amino-2-deoxy-D-glucuronate oxidase (316 aa).

NAD(+)-binding positions include 11-13 (GYI), 32-37 (YDINDS), E55, 81-84 (NYLH), 101-102 (EK), Q130, and 171-172 (WK).

This sequence belongs to the Gfo/Idh/MocA family. In terms of assembly, homotetramer.

It carries out the reaction UDP-2-acetamido-2-deoxy-alpha-D-glucuronate + NAD(+) = UDP-2-acetamido-2-deoxy-alpha-D-ribo-hex-3-uluronate + NADH + H(+). The enzyme catalyses 2-hydroxyglutarate + NAD(+) = 2-oxoglutarate + NADH + H(+). It functions in the pathway bacterial outer membrane biogenesis; LPS O-antigen biosynthesis. Plays a role in the biosynthesis of B-band O antigen for serotype O5. Catalyzes the NAD-dependent oxidation of UDP-N-acetylglucosaminuronic acid (UDP-D-GlcNAcA) to UDP-2-acetamido-2-deoxy-3-oxo-D-glucuronic acid (UDP-3-oxo-D-GlcNAcA). Cannot use UDP-GlcNAc or UDP-GalNAc as the nucleotide sugar substrate, and can use only poorly UDP-D-glucuronic acid (UDP-GlcA). Undergoes an NAD(+) recycling mechanism using 2-oxoglutarate as an oxidant. The chain is UDP-N-acetyl-2-amino-2-deoxy-D-glucuronate oxidase from Pseudomonas aeruginosa (strain ATCC 15692 / DSM 22644 / CIP 104116 / JCM 14847 / LMG 12228 / 1C / PRS 101 / PAO1).